The primary structure comprises 494 residues: Lysine--tRNA ligase (494 aa).

E407 and E414 together coordinate Mg(2+).

This sequence belongs to the class-II aminoacyl-tRNA synthetase family. In terms of assembly, homodimer. Mg(2+) is required as a cofactor.

Its subcellular location is the cytoplasm. It carries out the reaction tRNA(Lys) + L-lysine + ATP = L-lysyl-tRNA(Lys) + AMP + diphosphate. In Lactococcus lactis subsp. lactis (strain IL1403) (Streptococcus lactis), this protein is Lysine--tRNA ligase.